A 234-amino-acid polypeptide reads, in one-letter code: Large ribosomal subunit protein uL1 (234 aa).

Belongs to the universal ribosomal protein uL1 family. In terms of assembly, part of the 50S ribosomal subunit.

Binds directly to 23S rRNA. The L1 stalk is quite mobile in the ribosome, and is involved in E site tRNA release. Its function is as follows. Protein L1 is also a translational repressor protein, it controls the translation of the L11 operon by binding to its mRNA. The sequence is that of Large ribosomal subunit protein uL1 from Syntrophobacter fumaroxidans (strain DSM 10017 / MPOB).